A 608-amino-acid polypeptide reads, in one-letter code: MTSTEAGALRRLAPPARRFLAHRKGVLVRLALWSLAESGQAFLVGHAVARSVDEGFLAGDPRRGLLWLGVALVAVLSGARVVRGVFAQLAGVTEPLRDGLVRHAVDRSMARAAPGGPGGTDRAAVSRLTNQVEIARDSFAGLVLTLRSFVFTAAGALLGLLSLHPALLVVVLPPLAAGLALFLVTLRPMAAAQRRALAADEALGEHAASARAALRDLTACGTGPGAERHGADLVADAAAAARTLAGWAAVRTAALGVAGHLPVLALLVAVEWLRGHGVSVGALLGAFTYLVQSLLPALHTLMTALGAAGSRLLVVLDRILGPEPEPEPEPEPEPEPELGSGLEPEPEPASEPESGPSTASASAAAFAVHTAAAPAVELRSVTLSYGVRAEPVLDALDLRVAPGEHLAVVGPSGIGKSTLTRLVAGTLAPSRGEVRVAGRVVTGRPAAELAALRVLVPQDAYVFSGTVGDNLAYLRTDPSPAELDAAVEAFGLAPLVERLGGLDATVRPAELSPGERQLVALVRAYLSPAPLLLLDEATCHLDPASEARAEKALAGRSGTLVVVAHRLSSAVRADRTLVLDGIRAQSGTHAELLGRSPLYRDLTGHWNS.

5 helical membrane-spanning segments follow: residues 25–45 (GVLV…FLVG), 66–86 (LWLG…RGVF), 141–161 (GLVL…LGLL), 166–186 (ALLV…LVTL), and 253–273 (AALG…VEWL). Residues 30 to 296 (LALWSLAESG…FTYLVQSLLP (267 aa)) form the ABC transmembrane type-1 domain. Residues 321-362 (GPEPEPEPEPEPEPEPELGSGLEPEPEPASEPESGPSTASAS) are disordered. Positions 324 to 336 (PEPEPEPEPEPEP) are enriched in acidic residues. Positions 351-362 (EPESGPSTASAS) are enriched in low complexity. In terms of domain architecture, ABC transporter spans 376 to 605 (VELRSVTLSY…SPLYRDLTGH (230 aa)). An ATP-binding site is contributed by 410–417 (GPSGIGKS).

It belongs to the ABC transporter superfamily.

It is found in the cell membrane. Probably involved in exporting SapB from the cell. Expression of the ram locus (ramA, ramB and ramR) induces rapid aerial mycelium formation in S.lividans. The protein is ABC transporter ATP-binding protein RamB of Streptomyces coelicolor (strain ATCC BAA-471 / A3(2) / M145).